A 20-amino-acid polypeptide reads, in one-letter code: SVAVAGAVIEGASLTFNVLQ.

A plays an important role in the hemolytic activity region spans residues 3–12; it reads AVAGAVIEGA. The interval 11 to 20 is N-terminal region; sequence GASLTFNVLQ.

It belongs to the actinoporin family. Sea anemone subfamily. In terms of assembly, octamer or nonamer in membranes. Monomer in the soluble state.

Its subcellular location is the secreted. It localises to the nematocyst. The protein localises to the target cell membrane. Its function is as follows. Pore-forming protein that forms cations-selective hydrophilic pores of around 1 nm and causes cardiac stimulation and cytolysis. Pore formation is a multi-step process that involves specific recognition of membrane sphingomyelin (but neither cholesterol nor phosphatidylcholine) using aromatic rich region and adjacent phosphocholine (POC) binding site, firm binding to the membrane (mainly driven by hydrophobic interactions) accompanied by the transfer of the N-terminal region to the lipid-water interface and finally pore formation after oligomerization of monomers. Cytolytic effects include red blood cells hemolysis, platelet aggregation and lysis, cytotoxic and cytostatic effects on fibroblasts. Lethality in mammals has been ascribed to severe vasospasm of coronary vessels, cardiac arrhythmia, and inotropic effects. This Actinia equina (Beadlet anemone) protein is Equinatoxin-1.